The sequence spans 398 residues: S-adenosylmethionine synthase (398 aa).

Residue H16 participates in ATP binding. Residue D18 coordinates Mg(2+). E44 is a binding site for K(+). Positions 57 and 100 each coordinate L-methionine. The segment at 100–110 (QSPDIAQGVNE) is flexible loop. ATP-binding positions include 175–177 (DAK), 242–243 (RF), D251, 257–258 (RK), A274, and K278. D251 contributes to the L-methionine binding site. An L-methionine-binding site is contributed by K282.

Belongs to the AdoMet synthase family. In terms of assembly, homotetramer; dimer of dimers. The cofactor is Mg(2+). K(+) is required as a cofactor.

Its subcellular location is the cytoplasm. The enzyme catalyses L-methionine + ATP + H2O = S-adenosyl-L-methionine + phosphate + diphosphate. Its pathway is amino-acid biosynthesis; S-adenosyl-L-methionine biosynthesis; S-adenosyl-L-methionine from L-methionine: step 1/1. Catalyzes the formation of S-adenosylmethionine (AdoMet) from methionine and ATP. The overall synthetic reaction is composed of two sequential steps, AdoMet formation and the subsequent tripolyphosphate hydrolysis which occurs prior to release of AdoMet from the enzyme. In Streptococcus agalactiae serotype III (strain NEM316), this protein is S-adenosylmethionine synthase.